We begin with the raw amino-acid sequence, 355 residues long: Trans-3-hydroxy-L-proline dehydratase (355 aa).

Cysteine 111 functions as the Proton acceptor in the catalytic mechanism. Substrate-binding positions include 112 to 113 and 276 to 277; these read GH and GS.

This sequence belongs to the proline racemase family. As to quaternary structure, homodimer.

It catalyses the reaction trans-3-hydroxy-L-proline = 1-pyrroline-2-carboxylate + H2O. Functionally, catalyzes the dehydration of trans-3-hydroxy-L-proline (t3LHyp) to Delta(1)-pyrroline-2-carboxylate (Pyr2C). Together with LhpI, is involved in a metabolic pathway that converts t3LHyp to L-proline. The chain is Trans-3-hydroxy-L-proline dehydratase from Colwellia psychrerythraea (strain 34H / ATCC BAA-681) (Vibrio psychroerythus).